Here is an 83-residue protein sequence, read N- to C-terminus: uncharacterized protein (83 aa).

It belongs to the UPF0440 family.

This is an uncharacterized protein from Natronomonas pharaonis (strain ATCC 35678 / DSM 2160 / CIP 103997 / JCM 8858 / NBRC 14720 / NCIMB 2260 / Gabara) (Halobacterium pharaonis).